We begin with the raw amino-acid sequence, 1603 residues long: Vitellogenin-3 (1603 aa).

The N-terminal stretch at 1–15 (MKSIIIASLVALAIA) is a signal peptide. A Vitellogenin domain is found at 24–685 (FSPKSEYVYK…EKNAFLPKEV (662 aa)). N-linked (GlcNAc...) asparagine glycosylation is present at Asn1266. One can recognise a VWFD domain in the interval 1306–1475 (ATCKVGQSEV…SYLLKNEECE (170 aa)). 2 disulfides stabilise this stretch: Cys1308–Cys1438 and Cys1330–Cys1474.

In terms of tissue distribution, expressed in the intestine of adult hermaphrodites.

It localises to the secreted. Its function is as follows. Precursor of the egg-yolk proteins that are sources of nutrients during embryonic development. Together with other vitellogenins, may play a role in modulating life-span, acting via induction of autophagy and lysosomal lipolysis. The chain is Vitellogenin-3 (vit-3) from Caenorhabditis elegans.